We begin with the raw amino-acid sequence, 178 residues long: Photosystem II extrinsic protein V (178 aa).

Positions 1-38 are cleaved as a signal peptide; sequence MFSKFFSLQKAFAAARRRLLILILVLGMAGYAWGPALA. The heme c site is built by C71, C74, H75, and H126.

The protein belongs to the cytochrome c family. PsbV subfamily. PSII is composed of 1 copy each of membrane proteins PsbA, PsbB, PsbC, PsbD, PsbE, PsbF, PsbH, PsbI, PsbJ, PsbK, PsbL, PsbM, PsbT, PsbX, PsbY, PsbZ, Psb30/Ycf12, peripheral proteins PsbO, CyanoQ (PsbQ), PsbU, PsbV and a large number of cofactors. It forms dimeric complexes. Heme c is required as a cofactor.

The protein resides in the cellular thylakoid membrane. In terms of biological role, one of the extrinsic, lumenal subunits of photosystem II (PSII). PSII is a light-driven water plastoquinone oxidoreductase, using light energy to abstract electrons from H(2)O, generating a proton gradient subsequently used for ATP formation. The extrinsic proteins stabilize the structure of photosystem II oxygen-evolving complex (OEC), the ion environment of oxygen evolution and protect the OEC against heat-induced inactivation. Low-potential cytochrome c that plays a role in the OEC of PSII. This Synechococcus sp. (strain JA-3-3Ab) (Cyanobacteria bacterium Yellowstone A-Prime) protein is Photosystem II extrinsic protein V.